The chain runs to 346 residues: Transcription termination factor 4, mitochondrial (346 aa).

The transit peptide at 1 to 42 (MASLGRQVPEWHRLLALSWACLVRQTPHLREQKQMSPSLSCK) directs the protein to the mitochondrion. MTERF repeat units follow at residues 142-172 (FNALKKNPQLLKLSSMQMKRRSSYLRKLGLG), 177-204 (KRVLSVCPEVFTMHQRDIDRVVKVLREK), 209-239 (AQHITDVLHRCPTVLQEDPNELEYKFQYAYF), 245-270 (HLDIVRTNFLQYSITKIKQRHIYLER), and 290-318 (LRNILRVSEAEFLARTACSSVEEFQVFKK). The interval 310–327 (VEEFQVFKKLLDQEEEEE) is dimerization with NSUN4. Residues 321–346 (DQEEEEESESHASEEEEEEEEEEELL) are disordered. Residues 322–346 (QEEEEESESHASEEEEEEEEEEELL) are compositionally biased toward acidic residues.

Belongs to the mTERF family. In terms of assembly, heterodimer with NSUN4; this interaction may be required for NSUN4 recruitment to the mitochondrial large ribosomal subunit. Widely expressed, with highest levels in liver, followed by testis, kidney and brain.

The protein localises to the mitochondrion. Its function is as follows. Regulator of mitochondrial ribosome biogenesis and translation. Binds to mitochondrial ribosomal RNAs 16S, 12S and 7S. Targets NSUN4 RNA methyltransferase to the mitochondrial large ribosomal subunit. The sequence is that of Transcription termination factor 4, mitochondrial (Mterf4) from Mus musculus (Mouse).